Here is a 529-residue protein sequence, read N- to C-terminus: Bifunctional purine biosynthesis protein PurH (529 aa).

The 148-residue stretch at 1 to 148 (MNNVRPIRRA…KNHKDTTIVV (148 aa)) folds into the MGS-like domain.

This sequence belongs to the PurH family.

It catalyses the reaction (6R)-10-formyltetrahydrofolate + 5-amino-1-(5-phospho-beta-D-ribosyl)imidazole-4-carboxamide = 5-formamido-1-(5-phospho-D-ribosyl)imidazole-4-carboxamide + (6S)-5,6,7,8-tetrahydrofolate. It carries out the reaction IMP + H2O = 5-formamido-1-(5-phospho-D-ribosyl)imidazole-4-carboxamide. It functions in the pathway purine metabolism; IMP biosynthesis via de novo pathway; 5-formamido-1-(5-phospho-D-ribosyl)imidazole-4-carboxamide from 5-amino-1-(5-phospho-D-ribosyl)imidazole-4-carboxamide (10-formyl THF route): step 1/1. The protein operates within purine metabolism; IMP biosynthesis via de novo pathway; IMP from 5-formamido-1-(5-phospho-D-ribosyl)imidazole-4-carboxamide: step 1/1. The chain is Bifunctional purine biosynthesis protein PurH from Shewanella frigidimarina (strain NCIMB 400).